A 582-amino-acid chain; its full sequence is Multicopper oxidase LPR1 homolog 1 (582 aa).

Positions 1–20 (MRAKVELAVLLLVLVGVAAG) are cleaved as a signal peptide. Cu cation is bound by residues His150, His152, His198, and His200. N-linked (GlcNAc...) asparagine glycans are attached at residues Asn256, Asn300, and Asn308. The 70-residue stretch at 285–354 (PFLAVARRRY…DVVVDFSQST (70 aa)) folds into the Plastocyanin-like domain. Residues His467, His470, and His472 each coordinate Cu cation. N-linked (GlcNAc...) asparagine glycosylation is present at Asn504. Positions 563, 564, 565, 569, and 574 each coordinate Cu cation.

Belongs to the multicopper oxidase family. It depends on Cu cation as a cofactor. As to expression, highly expressed in roots, and at lower levels in basal stems and leaf blades.

The protein resides in the endoplasmic reticulum membrane. In terms of biological role, multicopper oxidase that may play a role in the maintenance of inorganic phosphate homeostasis. This is Multicopper oxidase LPR1 homolog 1 from Oryza sativa subsp. japonica (Rice).